Here is a 985-residue protein sequence, read N- to C-terminus: Lateral signaling target protein 2 homolog (985 aa).

Disordered regions lie at residues 310 to 453 (PLGS…ETDE), 498 to 520 (EYGA…PSTS), 533 to 640 (LRLP…SSLS), and 747 to 892 (DNVF…TTTA). Low complexity-rich tracts occupy residues 327–348 (HPTT…TNTH), 384–393 (SLSPNSTPTA), and 401–422 (PSHS…PADW). Positions 423–453 (SDGDDEDEEDDDDDIEVEEEELDSTDDETDE) are enriched in acidic residues. 2 positions are modified to phosphoserine: serine 537 and serine 538. Basic residues-rich tracts occupy residues 563 to 589 (VYRH…HHQH) and 596 to 607 (HPHRTTRSGRKR). Low complexity-rich tracts occupy residues 629-640 (ASGDTSAASSLS) and 761-770 (NGNQANASAQ). A compositionally biased stretch (polar residues) spans 776-785 (GSIQRNNTVD). Serine 808 bears the Phosphoserine mark. Residues 812-866 (QESASTSTSSSQLHQEQQQLQIQVQRQRNNSVGSNTPSSASSTSSSSEQNSPVSA) are compositionally biased toward low complexity. Residues 875–885 (QSNNETQMPSS) show a composition bias toward polar residues. The FYVE-type zinc-finger motif lies at 904 to 964 (DGKAPRCMSC…VCRECYVREV (61 aa)). Zn(2+) contacts are provided by cysteine 910, cysteine 913, cysteine 926, cysteine 929, cysteine 934, cysteine 937, cysteine 956, and cysteine 959.

The protein belongs to the lst-2 family.

In terms of biological role, negative regulator of epidermal growth factor receptor (EGFR) signaling. The chain is Lateral signaling target protein 2 homolog from Drosophila ananassae (Fruit fly).